The chain runs to 490 residues: Aspartyl/glutamyl-tRNA(Asn/Gln) amidotransferase subunit B (490 aa).

The protein belongs to the GatB/GatE family. GatB subfamily. In terms of assembly, heterotrimer of A, B and C subunits.

It catalyses the reaction L-glutamyl-tRNA(Gln) + L-glutamine + ATP + H2O = L-glutaminyl-tRNA(Gln) + L-glutamate + ADP + phosphate + H(+). It carries out the reaction L-aspartyl-tRNA(Asn) + L-glutamine + ATP + H2O = L-asparaginyl-tRNA(Asn) + L-glutamate + ADP + phosphate + 2 H(+). Allows the formation of correctly charged Asn-tRNA(Asn) or Gln-tRNA(Gln) through the transamidation of misacylated Asp-tRNA(Asn) or Glu-tRNA(Gln) in organisms which lack either or both of asparaginyl-tRNA or glutaminyl-tRNA synthetases. The reaction takes place in the presence of glutamine and ATP through an activated phospho-Asp-tRNA(Asn) or phospho-Glu-tRNA(Gln). This Burkholderia mallei (strain NCTC 10247) protein is Aspartyl/glutamyl-tRNA(Asn/Gln) amidotransferase subunit B.